Consider the following 374-residue polypeptide: Coiled-coil domain-containing protein 89 (374 aa).

The disordered stretch occupies residues 1-38 (MRAPMPQKEQAPRMDTSPPEERLEKQNEKLNNQEEEME). Thr16 bears the Phosphothreonine mark. The segment covering 19 to 32 (PEERLEKQNEKLNN) has biased composition (basic and acidic residues). Residues 19-350 (PEERLEKQNE…YDELRLQSEA (332 aa)) adopt a coiled-coil conformation.

This sequence belongs to the CCDC89 family. As to quaternary structure, interacts with HEY1.

The protein resides in the cytoplasm. Its subcellular location is the nucleus. This Macaca fascicularis (Crab-eating macaque) protein is Coiled-coil domain-containing protein 89 (CCDC89).